The primary structure comprises 500 residues: Glycogen synthase (500 aa).

Lysine 15 contributes to the ADP-alpha-D-glucose binding site.

This sequence belongs to the glycosyltransferase 1 family. Bacterial/plant glycogen synthase subfamily.

The catalysed reaction is [(1-&gt;4)-alpha-D-glucosyl](n) + ADP-alpha-D-glucose = [(1-&gt;4)-alpha-D-glucosyl](n+1) + ADP + H(+). It participates in glycan biosynthesis; glycogen biosynthesis. Synthesizes alpha-1,4-glucan chains using ADP-glucose. The chain is Glycogen synthase from Protochlamydia amoebophila (strain UWE25).